The primary structure comprises 226 residues: Probable transaldolase (226 aa).

Residue lysine 91 is the Schiff-base intermediate with substrate of the active site.

It belongs to the transaldolase family. Type 3B subfamily.

The protein localises to the cytoplasm. The enzyme catalyses D-sedoheptulose 7-phosphate + D-glyceraldehyde 3-phosphate = D-erythrose 4-phosphate + beta-D-fructose 6-phosphate. Its pathway is carbohydrate degradation; pentose phosphate pathway; D-glyceraldehyde 3-phosphate and beta-D-fructose 6-phosphate from D-ribose 5-phosphate and D-xylulose 5-phosphate (non-oxidative stage): step 2/3. Transaldolase is important for the balance of metabolites in the pentose-phosphate pathway. This chain is Probable transaldolase, found in Chlorobium phaeobacteroides (strain DSM 266 / SMG 266 / 2430).